Here is a 458-residue protein sequence, read N- to C-terminus: UDP-N-acetylmuramate--L-alanine ligase (458 aa).

Position 119–125 (119–125) interacts with ATP; that stretch reads GTHGKTT.

This sequence belongs to the MurCDEF family.

Its subcellular location is the cytoplasm. It catalyses the reaction UDP-N-acetyl-alpha-D-muramate + L-alanine + ATP = UDP-N-acetyl-alpha-D-muramoyl-L-alanine + ADP + phosphate + H(+). It participates in cell wall biogenesis; peptidoglycan biosynthesis. Its function is as follows. Cell wall formation. This Phocaeicola vulgatus (strain ATCC 8482 / DSM 1447 / JCM 5826 / CCUG 4940 / NBRC 14291 / NCTC 11154) (Bacteroides vulgatus) protein is UDP-N-acetylmuramate--L-alanine ligase.